The sequence spans 109 residues: Toxin YpjF (109 aa).

The protein belongs to the CbtA/YkfI/YpjF toxin family. Interacts with FtsZ but not MreB. Another group finds interaction with FtsZ and MreB.

Its function is as follows. Toxic component of a type IV toxin-antitoxin (TA) system. Acts as a dual toxin inhibitor that blocks cell division and cell elongation in genetically separable interactions with FtsZ and MreB. Overexpression results in inhibition of growth in liquid cultures. Overexpression leads to formation of lemon-shaped cells; inactivated by overexpression of cognate antitoxin YfjZ but not when the 2 genes are coexpressed from the same plasmid. Also neutralized by overexpression of non-cognate antitoxins YafW and CbeA. In Escherichia coli (strain K12), this protein is Toxin YpjF (ypjF).